The sequence spans 386 residues: DNA replication and repair protein RecF (386 aa).

Gly30–Thr37 provides a ligand contact to ATP.

It belongs to the RecF family.

The protein resides in the cytoplasm. Functionally, the RecF protein is involved in DNA metabolism; it is required for DNA replication and normal SOS inducibility. RecF binds preferentially to single-stranded, linear DNA. It also seems to bind ATP. The protein is DNA replication and repair protein RecF of Natranaerobius thermophilus (strain ATCC BAA-1301 / DSM 18059 / JW/NM-WN-LF).